Reading from the N-terminus, the 217-residue chain is Ependymin (217 aa).

The N-terminal stretch at 1-20 (MHTVKLLCVVFSCLCAIGWA) is a signal peptide. N-linked (GlcNAc...) asparagine glycosylation is found at asparagine 73 and asparagine 96.

The protein belongs to the ependymin family. As to quaternary structure, forms disulfide-linked dimers. Binds calcium through the terminal sialic acids. EPDs are synthesized in the meninx and secreted in the cerebrospinal fluid.

Its subcellular location is the secreted. Its function is as follows. May play a role in neural plasticity. May be involved during axon regeneration. The sequence is that of Ependymin (epd) from Danio rerio (Zebrafish).